The following is a 217-amino-acid chain: CASP-like protein UU4 (217 aa).

Positions 1–11 (MYTGQSDHRPE) are enriched in basic and acidic residues. Residues 1 to 21 (MYTGQSDHRPEGVGVNPGSPN) form a disordered region. Over 1 to 61 (MYTGQSDHRP…VKKNINHMSG (61 aa)) the chain is Cytoplasmic. A helical transmembrane segment spans residues 62 to 82 (LSLGLRVSEFVLSVIAFSLMA). The Extracellular segment spans residues 83-98 (SAEQNGAVYSTFTSYS). The helical transmembrane segment at 99 to 119 (FVLAINVLVALYAIGQIILSV) threads the bilayer. Residues 120–141 (MPLVSGSAPKKLYLFITFGCDQ) lie on the Cytoplasmic side of the membrane. Residues 142 to 162 (LSAFLLMAAGAAGASVAMLIN) form a helical membrane-spanning segment. Over 163–187 (RKGVIDDYGSGCIDGKITVFCAHAE) the chain is Extracellular. The chain crosses the membrane as a helical span at residues 188–208 (ASIAFTFLSFFCVMISSYLGV). Residues 209–217 (YNLAPYLIL) lie on the Cytoplasmic side of the membrane.

Belongs to the Casparian strip membrane proteins (CASP) family. In terms of assembly, homodimer and heterodimers.

It localises to the cell membrane. This chain is CASP-like protein UU4, found in Physcomitrium patens (Spreading-leaved earth moss).